A 422-amino-acid chain; its full sequence is Protein FAM53B (422 aa).

Phosphoserine is present on residues Ser-118, Ser-167, Ser-169, Ser-179, Ser-212, and Ser-268. Over residues 245–268 the composition is skewed to low complexity; that stretch reads SANSTPASTPELARRSSGLSRSRS. Residues 245–269 form a disordered region; that stretch reads SANSTPASTPELARRSSGLSRSRSQ. A Nuclear localization signal motif is present at residues 281–284; it reads KRRR.

The protein belongs to the FAM53 family. In terms of assembly, interacts with CTNNB1. In terms of tissue distribution, detected in skeletal muscle, kidney, spleen, thyroid, testis, ovary, small intestine, colon and peripheral blood.

Its subcellular location is the nucleus. In terms of biological role, acts as a regulator of Wnt signaling pathway by regulating beta-catenin (CTNNB1) nuclear localization. The chain is Protein FAM53B from Homo sapiens (Human).